A 552-amino-acid chain; its full sequence is Phosphoglucomutase (552 aa).

Serine 135 serves as the catalytic Phosphoserine intermediate. Mg(2+)-binding residues include serine 135, aspartate 289, aspartate 291, and aspartate 293.

The protein belongs to the phosphohexose mutase family. It depends on Mg(2+) as a cofactor.

It catalyses the reaction alpha-D-glucose 1-phosphate = alpha-D-glucose 6-phosphate. It functions in the pathway glycolipid metabolism; diglucosyl-diacylglycerol biosynthesis. In terms of biological role, catalyzes the interconversion between glucose-6-phosphate and alpha-glucose-1-phosphate. This is the first step in the biosynthesis of diglucosyl-diacylglycerol (Glc2-DAG), i.e. a glycolipid found in the membrane, which is also used as a membrane anchor for lipoteichoic acid (LTA). This chain is Phosphoglucomutase (pgcA), found in Staphylococcus saprophyticus subsp. saprophyticus (strain ATCC 15305 / DSM 20229 / NCIMB 8711 / NCTC 7292 / S-41).